We begin with the raw amino-acid sequence, 104 residues long: Secreted RxLR effector protein 54 (104 aa).

The N-terminal stretch at 1 to 19 (MIFTLLGLALVATKSACIA) is a signal peptide. The RxLR motif lies at 52 to 55 (RSLR). Asn-64 is a glycosylation site (N-linked (GlcNAc...) asparagine).

The protein belongs to the RxLR effector family.

It localises to the secreted. The protein resides in the host chloroplast envelope. It is found in the host mitochondrion. The protein localises to the host nucleus. Its subcellular location is the host cytoplasm. In terms of biological role, secreted effector that completely suppresses the host cell death induced by cell death-inducing proteins. This is Secreted RxLR effector protein 54 from Plasmopara viticola (Downy mildew of grapevine).